Here is a 535-residue protein sequence, read N- to C-terminus: Solute carrier family 22 member 7 (535 aa).

12 consecutive transmembrane segments (helical) span residues 21 to 41 (LVLMALPRMLLPMHFLLPVFM), 144 to 164 (ITSTCFFIGVLVGAVVYGYLS), 178 to 198 (VSSLVLGLMSAASINYIMFVV), 202 to 222 (LTGSALAGFTIIVLPLELEWL), 232 to 252 (VISTVFWSGGVLLLALVGYLI), 257 to 277 (WLLLAATLPCVPGIISIWWVP), 344 to 364 (ISLCCMMVWFGVNFSYYGLTL), 375 to 395 (QTQLLFGAVELPSKIMVYFLV), 402 to 422 (LTEAGMLLGAALTFGTSLLVS), 429 to 449 (ITALVVVGKAFSEAAFTTAYL), 464 to 484 (LGLTALMGRLGASLAPLAALL), and 489 to 509 (LLLPKVAYGGIALVAACTALL).

Belongs to the major facilitator (TC 2.A.1) superfamily. Organic cation transporter (TC 2.A.1.19) family. Expressed in liver and kidney. Expressed at low levels in adipose tissue. Expressed in fetal liver. In kidney, expressed at the brush border of the proximal tubule S3 segment (S3) in the outer stripe and medullary rays. In kidney, expression is higher in female than male.

It is found in the basolateral cell membrane. The protein resides in the apical cell membrane. It localises to the cell membrane. It catalyses the reaction orotate(out) + L-glutamate(in) = orotate(in) + L-glutamate(out). The catalysed reaction is 3',5'-cyclic GMP(in) = 3',5'-cyclic GMP(out). It carries out the reaction GMP(in) = GMP(out). The enzyme catalyses 2'-deoxyguanosine(in) = 2'-deoxyguanosine(out). It catalyses the reaction GDP(in) = GDP(out). The catalysed reaction is guanosine(in) = guanosine(out). It carries out the reaction GTP(in) = GTP(out). The enzyme catalyses 3',5'-cyclic AMP(in) = 3',5'-cyclic AMP(out). It catalyses the reaction creatinine(in) = creatinine(out). The catalysed reaction is prostaglandin E2(out) = prostaglandin E2(in). It carries out the reaction 2-oxoglutarate(in) = 2-oxoglutarate(out). The enzyme catalyses glutarate(in) = glutarate(out). It catalyses the reaction urate(out) = urate(in). The catalysed reaction is estrone 3-sulfate(out) = estrone 3-sulfate(in). In terms of biological role, functions as a Na(+)-independent bidirectional multispecific transporter. Contributes to the renal and hepatic elimination of endogenous organic compounds from the systemic circulation into the urine and bile, respectively. Capable of transporting a wide range of purine and pyrimidine nucleobases, nucleosides, and nucleotides with cGMP, 2'deoxyguanosine and GMP being the preferred substrates. Functions as a pH- and chloride-independent cGMP bidirectional facilitative transporter that can regulate both intracellular and extracellular levels of cGMP and may be involved in cGMP signaling pathways. Mediates orotate/glutamate bidirectional exchange and most likely display a physiological role in hepatic release of glutamate into the blood. Involved in renal secretion and possible reabsorption of creatinine. Able to uptake prostaglandin E2 (PGE2) and may contribute to PGE2 renal excretion. Also transports alpha-ketoglutarate and urate. Apart from the orotate/glutamate exchange, the counterions for the uptake of other SLC22A7/OAT2 substrates remain to be identified. The polypeptide is Solute carrier family 22 member 7 (Rattus norvegicus (Rat)).